The primary structure comprises 705 residues: Protein artemis (705 aa).

At Thr-380 the chain carries Phosphothreonine. Ser-385 carries the phosphoserine modification. Acidic residues predominate over residues 451–462; sequence EESNSDSGEELE. Disordered regions lie at residues 451–484, 535–569, and 638–675; these read EESN…NADP, PKLC…GWDS, and TLSG…AELP. Positions 546–559 are enriched in low complexity; that stretch reads THISSQNSSQSTHI. Polar residues predominate over residues 560 to 569; it reads TDQGSQGWDS. Over residues 652-662 the composition is skewed to low complexity; that stretch reads SSTRADSQSSS. Phosphoserine; by ATM is present on Ser-658.

The protein belongs to the DNA repair metallo-beta-lactamase (DRMBL) family. In terms of assembly, interacts with LIG4; the interaction is direct. Interacts with ATM. Interacts with BRCA1. Interacts with PRKDC. Interacts with TP53BP1. Also exhibits ATM- and phosphorylation-dependent interaction with the MRN complex, composed of MRE11, RAD50, and NBN. In terms of processing, phosphorylation on undefined residues by PRKDC may stimulate endonucleolytic activity on 5' and 3' hairpins and overhangs. PRKDC must remain present, even after phosphorylation, for efficient hairpin opening. Also phosphorylated by ATM in response to ionizing radiation (IR) and by ATR in response to ultraviolet (UV) radiation.

It is found in the nucleus. Functionally, required for V(D)J recombination, the process by which exons encoding the antigen-binding domains of immunoglobulins and T-cell receptor proteins are assembled from individual V, (D), and J gene segments. V(D)J recombination is initiated by the lymphoid specific RAG endonuclease complex, which generates site specific DNA double strand breaks (DSBs). These DSBs present two types of DNA end structures: hairpin sealed coding ends and phosphorylated blunt signal ends. These ends are independently repaired by the non homologous end joining (NHEJ) pathway to form coding and signal joints respectively. This protein likely exhibits single-strand specific 5'-3' exonuclease activity in isolation, and may acquire endonucleolytic activity on 5' and 3' hairpins and overhangs when in a complex with PRKDC. The latter activity may be required specifically for the resolution of closed hairpins prior to the formation of the coding joint. May also be required for the repair of complex DSBs induced by ionizing radiation, which require substantial end-processing prior to religation by NHEJ. This Mus musculus (Mouse) protein is Protein artemis (Dclre1c).